The chain runs to 142 residues: Large ribosomal subunit protein uL13 (142 aa).

This sequence belongs to the universal ribosomal protein uL13 family. In terms of assembly, part of the 50S ribosomal subunit.

This protein is one of the early assembly proteins of the 50S ribosomal subunit, although it is not seen to bind rRNA by itself. It is important during the early stages of 50S assembly. The sequence is that of Large ribosomal subunit protein uL13 from Koribacter versatilis (strain Ellin345).